Reading from the N-terminus, the 169-residue chain is FAM231A/C-like protein LOC102723383 (169 aa).

The segment at 82 to 140 (LIRSGSSQNESQEDQGAGLISQAGLKADNRRESSTWANEVEDRRPQCTPALNLTPSHPH) is disordered.

The protein belongs to the FAM231 family.

The sequence is that of FAM231A/C-like protein LOC102723383 from Homo sapiens (Human).